Consider the following 253-residue polypeptide: MILNTFNLQGKVALITGCDTGLGQGMAVGLAEAGCDIVGVNIVEPKETIEKVTAVGRRFLSLTADMSDISGHAALVEKAVAEFGKVDILVNNAGIIRREDAIEFSEKNWDDVMNLNIKSVFFMSQTVARQFIKQGHGGKIINIASMLSFQGGIRVPSYTASKSAVMGITRLLANEWAKHNINVNAIAPGYMATNNTQQLRADQDRSKEILDRIPAGRWGLPQDLQGPAVFLASSASDYVNGYTIAVDGGWLAR.

14–38 serves as a coordination point for NAD(+); that stretch reads LITGCDTGLGQGMAVGLAEAGCDIV. S145 contributes to the substrate binding site. Catalysis depends on Y158, which acts as the Proton acceptor.

Belongs to the short-chain dehydrogenases/reductases (SDR) family.

The enzyme catalyses 2-dehydro-3-deoxy-D-gluconate + NAD(+) = 3-deoxy-D-glycero-2,5-hexodiulosonate + NADH + H(+). It functions in the pathway glycan metabolism; pectin degradation; 2-dehydro-3-deoxy-D-gluconate from pectin: step 5/5. Its function is as follows. Catalyzes the reduction of 2,5-diketo-3-deoxygluconate (DKII or 4,6-dihydroxy-2,5-dioxohexanoate) into 2-keto-3-deoxygluconate (KDG or 2-dehydro-3-deoxygluconate) with a concomitant oxidation of NADH. The polypeptide is 2-dehydro-3-deoxy-D-gluconate 5-dehydrogenase (kduD) (Dickeya dadantii (strain 3937) (Erwinia chrysanthemi (strain 3937))).